Reading from the N-terminus, the 196-residue chain is ATP synthase subunit b (196 aa).

A helical membrane pass occupies residues 24 to 44 (PLSELLIGTLSFALLVAFFFW).

The protein belongs to the ATPase B chain family. F-type ATPases have 2 components, F(1) - the catalytic core - and F(0) - the membrane proton channel. F(1) has five subunits: alpha(3), beta(3), gamma(1), delta(1), epsilon(1). F(0) has three main subunits: a(1), b(2) and c(10-14). The alpha and beta chains form an alternating ring which encloses part of the gamma chain. F(1) is attached to F(0) by a central stalk formed by the gamma and epsilon chains, while a peripheral stalk is formed by the delta and b chains.

The protein resides in the cell membrane. Functionally, f(1)F(0) ATP synthase produces ATP from ADP in the presence of a proton or sodium gradient. F-type ATPases consist of two structural domains, F(1) containing the extramembraneous catalytic core and F(0) containing the membrane proton channel, linked together by a central stalk and a peripheral stalk. During catalysis, ATP synthesis in the catalytic domain of F(1) is coupled via a rotary mechanism of the central stalk subunits to proton translocation. Its function is as follows. Component of the F(0) channel, it forms part of the peripheral stalk, linking F(1) to F(0). The chain is ATP synthase subunit b from Frankia casuarinae (strain DSM 45818 / CECT 9043 / HFP020203 / CcI3).